The primary structure comprises 132 residues: Small ribosomal subunit protein uS8 (132 aa).

Belongs to the universal ribosomal protein uS8 family. In terms of assembly, part of the 30S ribosomal subunit. Contacts proteins S5 and S12.

One of the primary rRNA binding proteins, it binds directly to 16S rRNA central domain where it helps coordinate assembly of the platform of the 30S subunit. The polypeptide is Small ribosomal subunit protein uS8 (Pseudarthrobacter chlorophenolicus (strain ATCC 700700 / DSM 12829 / CIP 107037 / JCM 12360 / KCTC 9906 / NCIMB 13794 / A6) (Arthrobacter chlorophenolicus)).